Here is a 354-residue protein sequence, read N- to C-terminus: Vanillate O-demethylase oxygenase subunit (354 aa).

Residues 7 to 107 (WYVACTPDEI…VEERYGFIWV (101 aa)) form the Rieske domain. Positions 47, 49, 66, and 69 each coordinate [2Fe-2S] cluster.

It belongs to the bacterial ring-hydroxylating dioxygenase alpha subunit family. In terms of assembly, this demethylase system consists of two proteins: an oxygenase and an oxygenase reductase. Requires [2Fe-2S] cluster as cofactor. Fe cation serves as cofactor.

The enzyme catalyses vanillate + NADH + O2 + H(+) = 3,4-dihydroxybenzoate + formaldehyde + NAD(+) + H2O. Its pathway is xenobiotic degradation; vanillyl-alcohol degradation. In Pseudomonas sp. (strain HR199 / DSM 7063), this protein is Vanillate O-demethylase oxygenase subunit (vanA).